A 319-amino-acid chain; its full sequence is Beta-ketoacyl-[acyl-carrier-protein] synthase III (319 aa).

Active-site residues include cysteine 110 and histidine 246. Residues 247-251 are ACP-binding; that stretch reads QANYR. Asparagine 276 is a catalytic residue.

Belongs to the thiolase-like superfamily. FabH family. Homodimer.

The protein localises to the cytoplasm. It catalyses the reaction malonyl-[ACP] + acetyl-CoA + H(+) = 3-oxobutanoyl-[ACP] + CO2 + CoA. It participates in lipid metabolism; fatty acid biosynthesis. In terms of biological role, catalyzes the condensation reaction of fatty acid synthesis by the addition to an acyl acceptor of two carbons from malonyl-ACP. Catalyzes the first condensation reaction which initiates fatty acid synthesis and may therefore play a role in governing the total rate of fatty acid production. Possesses both acetoacetyl-ACP synthase and acetyl transacylase activities. Its substrate specificity determines the biosynthesis of branched-chain and/or straight-chain of fatty acids. This chain is Beta-ketoacyl-[acyl-carrier-protein] synthase III, found in Lactobacillus delbrueckii subsp. bulgaricus (strain ATCC 11842 / DSM 20081 / BCRC 10696 / JCM 1002 / NBRC 13953 / NCIMB 11778 / NCTC 12712 / WDCM 00102 / Lb 14).